A 142-amino-acid chain; its full sequence is Ribosome-binding factor A (142 aa).

The segment at 119–142 (EAKQKQHGVETDAEQGDTKEEGDK) is disordered.

This sequence belongs to the RbfA family. As to quaternary structure, monomer. Binds 30S ribosomal subunits, but not 50S ribosomal subunits or 70S ribosomes.

Its subcellular location is the cytoplasm. Functionally, one of several proteins that assist in the late maturation steps of the functional core of the 30S ribosomal subunit. Associates with free 30S ribosomal subunits (but not with 30S subunits that are part of 70S ribosomes or polysomes). Required for efficient processing of 16S rRNA. May interact with the 5'-terminal helix region of 16S rRNA. The polypeptide is Ribosome-binding factor A (Shewanella pealeana (strain ATCC 700345 / ANG-SQ1)).